A 1434-amino-acid chain; its full sequence is DNA-directed RNA polymerase subunit beta' (1434 aa).

Zn(2+) contacts are provided by cysteine 70, cysteine 72, cysteine 85, and cysteine 88. Mg(2+) is bound by residues aspartate 460, aspartate 462, and aspartate 464. Residues cysteine 840, cysteine 914, cysteine 921, and cysteine 924 each contribute to the Zn(2+) site.

Belongs to the RNA polymerase beta' chain family. In terms of assembly, the RNAP catalytic core consists of 2 alpha, 1 beta, 1 beta' and 1 omega subunit. When a sigma factor is associated with the core the holoenzyme is formed, which can initiate transcription. Mg(2+) serves as cofactor. Requires Zn(2+) as cofactor.

The catalysed reaction is RNA(n) + a ribonucleoside 5'-triphosphate = RNA(n+1) + diphosphate. In terms of biological role, DNA-dependent RNA polymerase catalyzes the transcription of DNA into RNA using the four ribonucleoside triphosphates as substrates. The protein is DNA-directed RNA polymerase subunit beta' of Tolumonas auensis (strain DSM 9187 / NBRC 110442 / TA 4).